A 433-amino-acid polypeptide reads, in one-letter code: Small ribosomal subunit biogenesis GTPase RsgA 1, mitochondrial (433 aa).

The tract at residues 1–20 (MLRAKHIGKNYSSSLSPVLS) is disordered. The CP-type G domain maps to 113 to 291 (SEILDPPVAN…LADTPGFNQP (179 aa)). 212–220 (GPSGVGKSS) is a GTP binding site. Zn(2+) is bound by residues C317, C322, H324, and C330.

Belongs to the TRAFAC class YlqF/YawG GTPase family. RsgA subfamily. In terms of assembly, monomer. Associates with 30S ribosomal subunit, binds 16S rRNA. Zn(2+) serves as cofactor.

It is found in the mitochondrion. Functionally, one of several proteins that assist in the late maturation steps of the functional core of the 30S ribosomal subunit. Helps release RbfA from mature subunits. May play a role in the assembly of ribosomal proteins into the subunit. Circularly permuted GTPase that catalyzes slow GTP hydrolysis, GTPase activity is stimulated by the 30S ribosomal subunit. Required for embryo development. The chain is Small ribosomal subunit biogenesis GTPase RsgA 1, mitochondrial from Arabidopsis thaliana (Mouse-ear cress).